Consider the following 88-residue polypeptide: Toxin ICK-12 (88 aa).

Residues 1–19 (MKSIVYMLLFCTFTVVILG) form the signal peptide. Cystine bridges form between C41–C55, C41–C78, C54–C67, and C81–C88.

This sequence belongs to the neurotoxin 27 (Jztx-72) family. ICK-41 subfamily. Expressed by the venom gland.

The protein resides in the secreted. Its function is as follows. Probable neurotoxin with ion channel impairing activity. The polypeptide is Toxin ICK-12 (Trittame loki (Brush-footed trapdoor spider)).